We begin with the raw amino-acid sequence, 341 residues long: N-acetyl-gamma-glutamyl-phosphate reductase (341 aa).

The active site involves Cys-151.

Belongs to the NAGSA dehydrogenase family. Type 1 subfamily.

It is found in the cytoplasm. The catalysed reaction is N-acetyl-L-glutamate 5-semialdehyde + phosphate + NADP(+) = N-acetyl-L-glutamyl 5-phosphate + NADPH + H(+). It functions in the pathway amino-acid biosynthesis; L-arginine biosynthesis; N(2)-acetyl-L-ornithine from L-glutamate: step 3/4. Catalyzes the NADPH-dependent reduction of N-acetyl-5-glutamyl phosphate to yield N-acetyl-L-glutamate 5-semialdehyde. This is N-acetyl-gamma-glutamyl-phosphate reductase from Chlorobaculum tepidum (strain ATCC 49652 / DSM 12025 / NBRC 103806 / TLS) (Chlorobium tepidum).